Here is a 1265-residue protein sequence, read N- to C-terminus: Guanine nucleotide exchange factor SDC25 (1265 aa).

The SH3 domain occupies 26–97 (QPIDVVECTY…PPSFTRSILN (72 aa)). Disordered stretches follow at residues 409 to 454 (IPAS…DTIW) and 623 to 648 (LNLDNAKDKKNGSQNTDIQEEEDEYE). The segment covering 416 to 428 (TSCSSETSHHSPS) has biased composition (low complexity). Residues 782–914 (SNNRIKGGSK…LLKEVNQKFK (133 aa)) form the N-terminal Ras-GEF domain. Residues 952 to 1199 (DPVLFATQLT…YQLSLIIEPK (248 aa)) enclose the Ras-GEF domain. Residues 1201–1252 (RKKVVPNSNSNNKSQEKSRDDQTDEGKTSTKKDRFSKFQLHKTKKKAPKVSK) are disordered. Residues 1214–1236 (SQEKSRDDQTDEGKTSTKKDRFS) show a composition bias toward basic and acidic residues. Residues 1239-1252 (QLHKTKKKAPKVSK) are compositionally biased toward basic residues.

In terms of biological role, promotes the exchange of Ras-bound GDP by GTP. This Saccharomyces cerevisiae (strain AWRI1631) (Baker's yeast) protein is Guanine nucleotide exchange factor SDC25 (SDC25).